A 53-amino-acid chain; its full sequence is Rubredoxin (53 aa).

In terms of domain architecture, Rubredoxin-like spans 1–53 (MTKYVCTVCGYVYDPEVGDPDNNINPGTSFQDIPEDWVCPLCGVGKDQFEEEA). Fe cation is bound by residues Cys-6, Cys-9, Cys-39, and Cys-42.

It belongs to the rubredoxin family. Fe(3+) serves as cofactor.

In terms of biological role, rubredoxin is a small nonheme, iron protein lacking acid-labile sulfide. Its single Fe, chelated to 4 Cys, functions as an electron acceptor and may also stabilize the conformation of the molecule. The sequence is that of Rubredoxin from Acetoanaerobium sticklandii (strain ATCC 12662 / DSM 519 / JCM 1433 / CCUG 9281 / NCIMB 10654 / HF) (Clostridium sticklandii).